Here is a 543-residue protein sequence, read N- to C-terminus: Chaperonin GroEL 2 (543 aa).

ATP-binding positions include 29 to 32 (TLGP), 86 to 90 (DGTTT), Gly-413, 477 to 479 (DAA), and Asp-493. Residues 523–543 (PQEPEPAAGGHGHGHQHGPGF) are disordered. Over residues 534 to 543 (GHGHQHGPGF) the composition is skewed to basic residues.

Belongs to the chaperonin (HSP60) family. Forms a cylinder of 14 subunits composed of two heptameric rings stacked back-to-back. Interacts with the co-chaperonin GroES.

It is found in the cytoplasm. It carries out the reaction ATP + H2O + a folded polypeptide = ADP + phosphate + an unfolded polypeptide.. Functionally, together with its co-chaperonin GroES, plays an essential role in assisting protein folding. The GroEL-GroES system forms a nano-cage that allows encapsulation of the non-native substrate proteins and provides a physical environment optimized to promote and accelerate protein folding. The chain is Chaperonin GroEL 2 from Salinispora tropica (strain ATCC BAA-916 / DSM 44818 / JCM 13857 / NBRC 105044 / CNB-440).